A 1067-amino-acid chain; its full sequence is Probable isoleucine--tRNA ligase, cytoplasmic (1067 aa).

Residues 47–57 carry the 'HIGH' region motif; it reads PFATGLPHYGH. The 'KMSKS' region signature appears at 604–608; the sequence is KMSKR. Residue lysine 607 coordinates ATP.

The protein belongs to the class-I aminoacyl-tRNA synthetase family.

The protein localises to the cytoplasm. The catalysed reaction is tRNA(Ile) + L-isoleucine + ATP = L-isoleucyl-tRNA(Ile) + AMP + diphosphate. The chain is Probable isoleucine--tRNA ligase, cytoplasmic (ileS) from Dictyostelium discoideum (Social amoeba).